The chain runs to 318 residues: Glycerol 2-dehydrogenase (NADP(+)) (318 aa).

Tyr-52 serves as the catalytic Proton donor. A substrate-binding site is contributed by His-115. 217 to 277 is an NADP(+) binding site; that stretch reads SPLGSQNQVP…SSTPSRIESN (61 aa).

This sequence belongs to the aldo/keto reductase family.

The enzyme catalyses glycerol + NADP(+) = dihydroxyacetone + NADPH + H(+). Glycerol oxidoreductase probably involved in glycerol synthesis. The chain is Glycerol 2-dehydrogenase (NADP(+)) (gld2) from Hypocrea jecorina (Trichoderma reesei).